Consider the following 354-residue polypeptide: Histidinol-phosphate aminotransferase (354 aa).

N6-(pyridoxal phosphate)lysine is present on Lys210.

It belongs to the class-II pyridoxal-phosphate-dependent aminotransferase family. Histidinol-phosphate aminotransferase subfamily. As to quaternary structure, homodimer. It depends on pyridoxal 5'-phosphate as a cofactor.

The enzyme catalyses L-histidinol phosphate + 2-oxoglutarate = 3-(imidazol-4-yl)-2-oxopropyl phosphate + L-glutamate. The protein operates within amino-acid biosynthesis; L-histidine biosynthesis; L-histidine from 5-phospho-alpha-D-ribose 1-diphosphate: step 7/9. This chain is Histidinol-phosphate aminotransferase, found in Clostridium botulinum (strain Okra / Type B1).